Consider the following 407-residue polypeptide: E3 ubiquitin-protein ligase TRIM13 (407 aa).

Residues 10 to 58 (CPICCSLFDDPRVLPCSHNFCKKCLEGLLEGNVRNSLWRPSPFKCPTCR) form an RING-type zinc finger. The segment at 89-131 (PKMPVCKEHLGQPLNIFCVTDMQLICGVCATRGSHTKHVFSSI) adopts a B box-type zinc-finger fold. Zn(2+) contacts are provided by cysteine 94, histidine 97, cysteine 117, and histidine 123. Positions 172–200 (LQLLTKDSDKVKEFFEKLQHTLDQKKNEI) form a coiled coil. The chain crosses the membrane as a helical span at residues 316–336 (LLLMAVVLLGLLVFFGPTVFL).

As to quaternary structure, interacts (via C-terminal domain) with VCP. Interacts with AKT1; the interaction ubiquitinates AKT1 and leads to its proteasomal degradation. Interacts with MDM2; the interaction ubiquitinates AKT1 and leads to its proteasomal degradation. Interacts with p62/SQSTM1. Interacts with TRAF6. Interacts with IKBKG/NEMO. Post-translationally, auto-ubiquitinated; requires the RING-type zinc finger. Auto-polyubiquitination leads to proteasomal degradation.

It localises to the endoplasmic reticulum membrane. The catalysed reaction is S-ubiquitinyl-[E2 ubiquitin-conjugating enzyme]-L-cysteine + [acceptor protein]-L-lysine = [E2 ubiquitin-conjugating enzyme]-L-cysteine + N(6)-ubiquitinyl-[acceptor protein]-L-lysine.. The protein operates within protein modification; protein ubiquitination. Its function is as follows. Endoplasmic reticulum (ER) membrane anchored E3 ligase involved in the retrotranslocation and turnover of membrane and secretory proteins from the ER through a set of processes named ER-associated degradation (ERAD). This process acts on misfolded proteins as well as in the regulated degradation of correctly folded proteins. Enhances ionizing radiation-induced p53/TP53 stability and apoptosis via ubiquitinating MDM2 and AKT1 and decreasing AKT1 kinase activity through MDM2 and AKT1 proteasomal degradation. Regulates ER stress-induced autophagy, and may act as a tumor suppressor. Also plays a role in innate immune response by stimulating NF-kappa-B activity in the TLR2 signaling pathway. Ubiquitinates TRAF6 via the 'Lys-29'-linked polyubiquitination chain resulting in NF-kappa-B activation. Participates as well in T-cell receptor-mediated NF-kappa-B activation. In the presence of TNF, modulates the IKK complex by regulating IKBKG/NEMO ubiquitination leading to the repression of NF-kappa-B. This chain is E3 ubiquitin-protein ligase TRIM13 (Trim13), found in Rattus norvegicus (Rat).